A 484-amino-acid chain; its full sequence is Glutamyl-tRNA(Gln) amidotransferase subunit A (484 aa).

Active-site charge relay system residues include Lys77 and Ser152. Residue Ser176 is the Acyl-ester intermediate of the active site.

Belongs to the amidase family. GatA subfamily. In terms of assembly, heterotrimer of A, B and C subunits.

The enzyme catalyses L-glutamyl-tRNA(Gln) + L-glutamine + ATP + H2O = L-glutaminyl-tRNA(Gln) + L-glutamate + ADP + phosphate + H(+). Its function is as follows. Allows the formation of correctly charged Gln-tRNA(Gln) through the transamidation of misacylated Glu-tRNA(Gln) in organisms which lack glutaminyl-tRNA synthetase. The reaction takes place in the presence of glutamine and ATP through an activated gamma-phospho-Glu-tRNA(Gln). This Lacticaseibacillus paracasei (strain ATCC 334 / BCRC 17002 / CCUG 31169 / CIP 107868 / KCTC 3260 / NRRL B-441) (Lactobacillus paracasei) protein is Glutamyl-tRNA(Gln) amidotransferase subunit A.